We begin with the raw amino-acid sequence, 333 residues long: tRNA dimethylallyltransferase (333 aa).

Residue 23–30 participates in ATP binding; sequence GPTGAGKT. 25–30 serves as a coordination point for substrate; sequence TGAGKT. Interaction with substrate tRNA stretches follow at residues 53–56 and 177–181; these read DSAL and QRVQR.

It belongs to the IPP transferase family. In terms of assembly, monomer. Mg(2+) serves as cofactor.

It catalyses the reaction adenosine(37) in tRNA + dimethylallyl diphosphate = N(6)-dimethylallyladenosine(37) in tRNA + diphosphate. Its function is as follows. Catalyzes the transfer of a dimethylallyl group onto the adenine at position 37 in tRNAs that read codons beginning with uridine, leading to the formation of N6-(dimethylallyl)adenosine (i(6)A). In Polynucleobacter asymbioticus (strain DSM 18221 / CIP 109841 / QLW-P1DMWA-1) (Polynucleobacter necessarius subsp. asymbioticus), this protein is tRNA dimethylallyltransferase.